The chain runs to 132 residues: Fumarate reductase subunit C (132 aa).

The next 3 membrane-spanning stretches (helical) occupy residues 30 to 50 (ATSV…LCFA), 70 to 90 (IVVF…VTYF), and 110 to 130 (VVRN…LVLV).

Belongs to the FrdC family. As to quaternary structure, part of an enzyme complex containing four subunits: a flavoprotein (FrdA), an iron-sulfur protein (FrdB), and two hydrophobic anchor proteins (FrdC and FrdD).

It localises to the cell inner membrane. Its function is as follows. Anchors the catalytic components of the fumarate reductase complex to the cell membrane, binds quinones. The sequence is that of Fumarate reductase subunit C from Haemophilus influenzae (strain ATCC 51907 / DSM 11121 / KW20 / Rd).